The primary structure comprises 456 residues: UDP-N-acetylmuramate--L-alanine ligase (456 aa).

Position 114–120 (114–120) interacts with ATP; it reads GTHGKTT.

It belongs to the MurCDEF family.

The protein localises to the cytoplasm. It catalyses the reaction UDP-N-acetyl-alpha-D-muramate + L-alanine + ATP = UDP-N-acetyl-alpha-D-muramoyl-L-alanine + ADP + phosphate + H(+). It participates in cell wall biogenesis; peptidoglycan biosynthesis. Functionally, cell wall formation. This chain is UDP-N-acetylmuramate--L-alanine ligase, found in Porphyromonas gingivalis (strain ATCC 33277 / DSM 20709 / CIP 103683 / JCM 12257 / NCTC 11834 / 2561).